Consider the following 264-residue polypeptide: Phosphonoacetaldehyde hydrolase (264 aa).

The Nucleophile role is filled by aspartate 9. Mg(2+)-binding residues include aspartate 9 and alanine 11. The Schiff-base intermediate with substrate role is filled by lysine 50. Aspartate 183 is a binding site for Mg(2+).

Belongs to the HAD-like hydrolase superfamily. PhnX family. As to quaternary structure, homodimer. Mg(2+) serves as cofactor.

It catalyses the reaction phosphonoacetaldehyde + H2O = acetaldehyde + phosphate + H(+). Its function is as follows. Involved in phosphonate degradation. The chain is Phosphonoacetaldehyde hydrolase from Bacillus anthracis.